Consider the following 98-residue polypeptide: NADH-ubiquinone oxidoreductase chain 4L (98 aa).

Helical transmembrane passes span 1-21, 26-46, and 59-79; these read MTTIYLNLILAFTLALSGVLI, LLSTLLCLEGMMLSLFILMAL, and APLILLVFSACEAGVGLALLV.

It belongs to the complex I subunit 4L family. In terms of assembly, core subunit of respiratory chain NADH dehydrogenase (Complex I) which is composed of 45 different subunits.

The protein localises to the mitochondrion inner membrane. It catalyses the reaction a ubiquinone + NADH + 5 H(+)(in) = a ubiquinol + NAD(+) + 4 H(+)(out). Functionally, core subunit of the mitochondrial membrane respiratory chain NADH dehydrogenase (Complex I) which catalyzes electron transfer from NADH through the respiratory chain, using ubiquinone as an electron acceptor. Part of the enzyme membrane arm which is embedded in the lipid bilayer and involved in proton translocation. The chain is NADH-ubiquinone oxidoreductase chain 4L (MT-ND4L) from Rhyncholestes raphanurus (Chilean shrew opossum).